The following is a 192-amino-acid chain: Orotate phosphoribosyltransferase (192 aa).

5-phospho-alpha-D-ribose 1-diphosphate contacts are provided by residues Arg-102, Lys-103, Lys-106, and 129–137 (EDVVTTGRS). Positions 133 and 161 each coordinate orotate.

It belongs to the purine/pyrimidine phosphoribosyltransferase family. PyrE subfamily. As to quaternary structure, homodimer. It depends on Mg(2+) as a cofactor.

The enzyme catalyses orotidine 5'-phosphate + diphosphate = orotate + 5-phospho-alpha-D-ribose 1-diphosphate. Its pathway is pyrimidine metabolism; UMP biosynthesis via de novo pathway; UMP from orotate: step 1/2. Its function is as follows. Catalyzes the transfer of a ribosyl phosphate group from 5-phosphoribose 1-diphosphate to orotate, leading to the formation of orotidine monophosphate (OMP). In Prochlorococcus marinus (strain SARG / CCMP1375 / SS120), this protein is Orotate phosphoribosyltransferase.